Reading from the N-terminus, the 250-residue chain is Envelope glycoprotein L (250 aa).

The N-terminal stretch at 1 to 18 (MELLLFVMSLILLTFSKA) is a signal peptide. The gL betaherpesvirus-type domain maps to 31-239 (KLDDCIAAVI…EAYNSKLPFR (209 aa)). Cys-136 and Cys-141 are joined by a disulfide.

The protein belongs to the herpesviridae glycoprotein L (gL) family. Betaherpesvirinae gL subfamily. Interacts with glycoprotein H (gH); this interaction is necessary for the correct processing and cell surface expression of gH. Part of a gH-gL-gO complex.

Its subcellular location is the virion membrane. It is found in the host cell membrane. It localises to the host Golgi apparatus. The protein resides in the host trans-Golgi network. The heterodimer glycoprotein H-glycoprotein L is required for the fusion of viral and plasma membranes leading to virus entry into the host cell. Acts as a functional inhibitor of gH and maintains gH in an inhibited form. Upon binding to host integrins, gL dissociates from gH leading to activation of the viral fusion glycoproteins gB and gH. The sequence is that of Envelope glycoprotein L from Homo sapiens (Human).